The sequence spans 232 residues: Sugar fermentation stimulation protein homolog (232 aa).

It belongs to the SfsA family.

The sequence is that of Sugar fermentation stimulation protein homolog from Shouchella clausii (strain KSM-K16) (Alkalihalobacillus clausii).